Consider the following 314-residue polypeptide: Curved DNA-binding protein (314 aa).

A J domain is found at 5–69; the sequence is DYYKILDVEP…EKRAEYDELR (65 aa). Residues 73–92 are disordered; that stretch reads RQGRPFQTPPGWQSRAGAGA.

The protein localises to the cytoplasm. It localises to the nucleoid. DNA-binding protein that preferentially recognizes a curved DNA sequence. It is probably a functional analog of DnaJ; displays overlapping activities with DnaJ, but functions under different conditions, probably acting as a molecular chaperone in an adaptive response to environmental stresses other than heat shock. Lacks autonomous chaperone activity; binds native substrates and targets them for recognition by DnaK. Its activity is inhibited by the binding of CbpM. This chain is Curved DNA-binding protein, found in Pseudomonas syringae pv. tomato (strain ATCC BAA-871 / DC3000).